Reading from the N-terminus, the 299-residue chain is Regucalcin (299 aa).

Position 18 (Glu-18) interacts with a divalent metal cation. Positions 101, 103, and 121 each coordinate substrate. N6-succinyllysine is present on Lys-144. A divalent metal cation is bound by residues Asn-154 and Asp-204. The Proton donor/acceptor role is filled by Asp-204. An N6-succinyllysine mark is found at Lys-244 and Lys-253.

It belongs to the SMP-30/CGR1 family. Monomer. Requires Zn(2+) as cofactor. It depends on Mn(2+) as a cofactor. The cofactor is Ca(2+). Mg(2+) serves as cofactor.

The protein localises to the cytoplasm. It catalyses the reaction D-glucono-1,5-lactone + H2O = D-gluconate + H(+). In terms of biological role, gluconolactonase with low activity towards other sugar lactones, including gulonolactone and galactonolactone. Can also hydrolyze diisopropyl phosphorofluoridate and phenylacetate (in vitro). Calcium-binding protein. Modulates Ca(2+) signaling, and Ca(2+)-dependent cellular processes and enzyme activities. This is Regucalcin (RGN) from Homo sapiens (Human).